A 295-amino-acid polypeptide reads, in one-letter code: Protoheme IX farnesyltransferase (295 aa).

Transmembrane regions (helical) follow at residues valine 8–alanine 28, tyrosine 35–phenylalanine 55, valine 74–isoleucine 94, proline 106–leucine 125, valine 132–alanine 152, leucine 162–phenylalanine 182, isoleucine 208–alanine 228, leucine 233–alanine 253, and phenylalanine 264–valine 284.

This sequence belongs to the UbiA prenyltransferase family. Protoheme IX farnesyltransferase subfamily.

Its subcellular location is the cell inner membrane. It carries out the reaction heme b + (2E,6E)-farnesyl diphosphate + H2O = Fe(II)-heme o + diphosphate. It participates in porphyrin-containing compound metabolism; heme O biosynthesis; heme O from protoheme: step 1/1. Converts heme B (protoheme IX) to heme O by substitution of the vinyl group on carbon 2 of heme B porphyrin ring with a hydroxyethyl farnesyl side group. The chain is Protoheme IX farnesyltransferase from Cronobacter sakazakii (strain ATCC BAA-894) (Enterobacter sakazakii).